A 466-amino-acid chain; its full sequence is Argininosuccinate lyase (466 aa).

This sequence belongs to the lyase 1 family. Argininosuccinate lyase subfamily.

The protein localises to the cytoplasm. It carries out the reaction 2-(N(omega)-L-arginino)succinate = fumarate + L-arginine. It functions in the pathway amino-acid biosynthesis; L-arginine biosynthesis; L-arginine from L-ornithine and carbamoyl phosphate: step 3/3. The sequence is that of Argininosuccinate lyase from Bartonella tribocorum (strain CIP 105476 / IBS 506).